We begin with the raw amino-acid sequence, 801 residues long: Phenylalanine--tRNA ligase beta subunit (801 aa).

The tRNA-binding domain occupies 39–147 (GGGLDEVVVA…TDLPLGVPVF (109 aa)). In terms of domain architecture, B5 spans 401 to 477 (LPRRTVRFRV…RLNGYNNIPV (77 aa)). Asp455, Asp461, Glu464, and Glu465 together coordinate Mg(2+). Residues 708 to 801 (SRFPDTFRDI…LVKKLAVTIR (94 aa)) form the FDX-ACB domain.

The protein belongs to the phenylalanyl-tRNA synthetase beta subunit family. Type 1 subfamily. As to quaternary structure, tetramer of two alpha and two beta subunits. Mg(2+) serves as cofactor.

It localises to the cytoplasm. The enzyme catalyses tRNA(Phe) + L-phenylalanine + ATP = L-phenylalanyl-tRNA(Phe) + AMP + diphosphate + H(+). The chain is Phenylalanine--tRNA ligase beta subunit from Geobacter metallireducens (strain ATCC 53774 / DSM 7210 / GS-15).